Here is a 188-residue protein sequence, read N- to C-terminus: Archaemetzincin (188 aa).

H137 contributes to the Zn(2+) binding site. The active-site Proton acceptor is the E138. Zn(2+)-binding residues include H141, H147, C148, C153, C172, and C175.

This sequence belongs to the peptidase M54 family. In terms of assembly, monomer. Requires Zn(2+) as cofactor.

Functionally, probable zinc metalloprotease whose natural substrate is unknown. This is Archaemetzincin from Pyrococcus horikoshii (strain ATCC 700860 / DSM 12428 / JCM 9974 / NBRC 100139 / OT-3).